We begin with the raw amino-acid sequence, 553 residues long: Methionine--tRNA ligase (553 aa).

A 'HIGH' region motif is present at residues 12 to 22; the sequence is PYANSQLHLGH. Zn(2+) contacts are provided by Cys144, Cys147, Cys157, and Cys160. Residues 332–336 carry the 'KMSKS' region motif; it reads KFSKS. Lys335 is an ATP binding site.

It belongs to the class-I aminoacyl-tRNA synthetase family. MetG type 1 subfamily. As to quaternary structure, monomer. The cofactor is Zn(2+).

Its subcellular location is the cytoplasm. The enzyme catalyses tRNA(Met) + L-methionine + ATP = L-methionyl-tRNA(Met) + AMP + diphosphate. Is required not only for elongation of protein synthesis but also for the initiation of all mRNA translation through initiator tRNA(fMet) aminoacylation. The polypeptide is Methionine--tRNA ligase (Dehalococcoides mccartyi (strain CBDB1)).